The primary structure comprises 453 residues: Major fimbrium subunit FimC (453 aa).

The first 28 residues, 1–28 (MKMKYFHHPSGLLPRLLLLLLLTMGAVA), serve as a signal peptide directing secretion. Residue cysteine 29 is the site of N-palmitoyl cysteine attachment. Residue cysteine 29 is the site of S-diacylglycerol cysteine attachment. A propeptide spanning residues 29-56 (CTKEDNPDQPTSDEVATVKMSLDDVEMR) is cleaved from the precursor.

Belongs to the bacteroidetes fimbrillin superfamily. FimA/Mfa1 family. Fimbriae are composed of a major, structural subunit and the minor components FimC, FimD and FimE. Identified in a complex composed of FimC, FimD and FimE (in vitro). The complex interacts with host extracellular matrix proteins, including fibronectin and type I collagen. Interacts with host CXCR4.

It localises to the fimbrium. The protein localises to the cell outer membrane. Minor component of fimbriae. These long, filamentous pili are attached to the cell surface; they mediate biofilm formation, adhesion onto host cells and onto other bacteria that are part of the oral microbiome. They play an important role in invasion of periodontal tissues and are major virulence factors. FimC, FimD and FimE contribute to interaction with host CXCR4 and thereby down-regulate the TLR2-mediated host immune response. The protein is Major fimbrium subunit FimC of Porphyromonas gingivalis (strain ATCC 33277 / DSM 20709 / CIP 103683 / JCM 12257 / NCTC 11834 / 2561).